A 221-amino-acid chain; its full sequence is 7-cyano-7-deazaguanine synthase (221 aa).

ATP is bound at residue Leu10–Met20. Zn(2+) is bound by residues Cys188, Cys196, Cys199, and Cys202.

It belongs to the QueC family. In terms of assembly, homodimer. Requires Zn(2+) as cofactor.

The enzyme catalyses 7-carboxy-7-deazaguanine + NH4(+) + ATP = 7-cyano-7-deazaguanine + ADP + phosphate + H2O + H(+). It functions in the pathway purine metabolism; 7-cyano-7-deazaguanine biosynthesis. Its function is as follows. Catalyzes the ATP-dependent conversion of 7-carboxy-7-deazaguanine (CDG) to 7-cyano-7-deazaguanine (preQ(0)). This Oceanobacillus iheyensis (strain DSM 14371 / CIP 107618 / JCM 11309 / KCTC 3954 / HTE831) protein is 7-cyano-7-deazaguanine synthase.